We begin with the raw amino-acid sequence, 215 residues long: Probable phosphoglycerate mutase GpmB (215 aa).

Substrate contacts are provided by residues 8-15, 21-22, arginine 58, arginine 60, 82-85, 104-105, and 151-152; these read RHGETQWN, QG, ELDM, RR, and GI. The active-site Tele-phosphohistidine intermediate is the histidine 9. Glutamate 82 acts as the Proton donor/acceptor in catalysis.

The protein belongs to the phosphoglycerate mutase family. GpmB subfamily.

It catalyses the reaction (2R)-2-phosphoglycerate = (2R)-3-phosphoglycerate. It participates in carbohydrate degradation; glycolysis; pyruvate from D-glyceraldehyde 3-phosphate: step 3/5. This Klebsiella pneumoniae subsp. pneumoniae (strain ATCC 700721 / MGH 78578) protein is Probable phosphoglycerate mutase GpmB.